The sequence spans 373 residues: Queuine tRNA-ribosyltransferase (373 aa).

Catalysis depends on Asp91, which acts as the Proton acceptor. Substrate contacts are provided by residues 91–95, Asp145, Gln187, and Gly214; that span reads DSGGF. An RNA binding region spans residues 245–251; sequence GVGKPED. Residue Asp264 is the Nucleophile of the active site. Positions 269–273 are RNA binding; important for wobble base 34 recognition; the sequence is TRNAR. Residues Cys302, Cys304, Cys307, and His333 each coordinate Zn(2+).

Belongs to the queuine tRNA-ribosyltransferase family. In terms of assembly, homodimer. Within each dimer, one monomer is responsible for RNA recognition and catalysis, while the other monomer binds to the replacement base PreQ1. Zn(2+) is required as a cofactor.

The enzyme catalyses 7-aminomethyl-7-carbaguanine + guanosine(34) in tRNA = 7-aminomethyl-7-carbaguanosine(34) in tRNA + guanine. It functions in the pathway tRNA modification; tRNA-queuosine biosynthesis. Catalyzes the base-exchange of a guanine (G) residue with the queuine precursor 7-aminomethyl-7-deazaguanine (PreQ1) at position 34 (anticodon wobble position) in tRNAs with GU(N) anticodons (tRNA-Asp, -Asn, -His and -Tyr). Catalysis occurs through a double-displacement mechanism. The nucleophile active site attacks the C1' of nucleotide 34 to detach the guanine base from the RNA, forming a covalent enzyme-RNA intermediate. The proton acceptor active site deprotonates the incoming PreQ1, allowing a nucleophilic attack on the C1' of the ribose to form the product. After dissociation, two additional enzymatic reactions on the tRNA convert PreQ1 to queuine (Q), resulting in the hypermodified nucleoside queuosine (7-(((4,5-cis-dihydroxy-2-cyclopenten-1-yl)amino)methyl)-7-deazaguanosine). This Idiomarina loihiensis (strain ATCC BAA-735 / DSM 15497 / L2-TR) protein is Queuine tRNA-ribosyltransferase.